The chain runs to 563 residues: Inclusion membrane protein M (563 aa).

Over 1 to 36 the chain is Cytoplasmic; sequence MVYFRAHQPRHTPKTFPLEVHHSFSDKHPQIAKAMR. A helical membrane pass occupies residues 37-57; sequence ITGIALAALSLLAVVACVIAV. A topological domain (vacuolar) is located at residue Ser-58. The chain crosses the membrane as a helical span at residues 59–79; sequence AGGAAIPLAVISGIAVMSGLL. Residues 80 to 252 are Cytoplasmic-facing; that stretch reads SAATIICSAK…VLKVALSLGV (173 aa). The helical transmembrane segment at 253–273 threads the bilayer; sequence LAGVAALIIFLPPSLPFIAVI. Position 274 (Gly-274) is a topological domain, vacuolar. A helical membrane pass occupies residues 275–295; sequence VSSLALGMASFLMIRGIKYLL. Residues 296 to 563 lie on the Cytoplasmic side of the membrane; it reads EHSPLNRKQL…QLAQYLLDNH (268 aa).

It belongs to the chlamydial CPn_0065/CT_288/TC_0561 family. In terms of assembly, interacts with host CCDC146. In host cells infected with C.trachomatis incM, CCDC146 is recruited to the periphery of the pathogen-containing vacuole but recruitment is not dependent on incM.

The protein resides in the host vacuole. It is found in the host pathogen-containing vacuole. Its subcellular location is the host pathogen-containing vacuole membrane. The protein localises to the host pathogen-containing vacuole lumen. It localises to the secreted. In terms of biological role, interferes with host cell cytokinesis, centrosome positioning and Golgi distribution, and contributes to the morphology and stability of the pathogen-containing vacuole. May exert its effects by acting directly or indirectly on host microtubules. The polypeptide is Inclusion membrane protein M (Chlamydia trachomatis serovar D (strain ATCC VR-885 / DSM 19411 / UW-3/Cx)).